Reading from the N-terminus, the 168-residue chain is Small ribosomal subunit protein bS16 (168 aa).

A disordered region spans residues 110–168; the sequence is LSEANNGPTAEAITEKKKKAREEKEAKEAAEKAAAEKAAAAEAEASEEAPAEEAASEEA. Over residues 129 to 144 the composition is skewed to basic and acidic residues; the sequence is AREEKEAKEAAEKAAA. The segment covering 153–168 has biased composition (acidic residues); that stretch reads EASEEAPAEEAASEEA.

This sequence belongs to the bacterial ribosomal protein bS16 family.

This is Small ribosomal subunit protein bS16 from Corynebacterium efficiens (strain DSM 44549 / YS-314 / AJ 12310 / JCM 11189 / NBRC 100395).